The chain runs to 775 residues: Subtilisin-like protease SBT3.8 (775 aa).

The signal sequence occupies residues 1–26 (MKSCRTLIFVAIILNGLSTFVAHAGA). Positions 27–109 (ESKVHIVYLG…VTPDSFYQLD (83 aa)) are cleaved as a propeptide — activation peptide. Positions 30–108 (VHIVYLGEKQ…HVTPDSFYQL (79 aa)) constitute an Inhibitor I9 domain. The 510-residue stretch at 113–622 (TWDYLGLSVA…GGLVNPEKAA (510 aa)) folds into the Peptidase S8 domain. Asparagine 129 carries N-linked (GlcNAc...) asparagine glycosylation. Aspartate 143 (charge relay system) is an active-site residue. Residues asparagine 174 and asparagine 202 are each glycosylated (N-linked (GlcNAc...) asparagine). The active-site Charge relay system is histidine 218. One can recognise a PA domain in the interval 384–476 (SLVYPENPGN…VDYELGTDIL (93 aa)). N-linked (GlcNAc...) asparagine glycosylation is found at asparagine 395, asparagine 410, and asparagine 538. Serine 553 serves as the catalytic Charge relay system. N-linked (GlcNAc...) asparagine glycans are attached at residues asparagine 645, asparagine 721, and asparagine 756.

Belongs to the peptidase S8 family.

Its subcellular location is the secreted. The polypeptide is Subtilisin-like protease SBT3.8 (Arabidopsis thaliana (Mouse-ear cress)).